The following is a 229-amino-acid chain: Orotate phosphoribosyltransferase (229 aa).

5-phospho-alpha-D-ribose 1-diphosphate contacts are provided by residues Arg107, Lys108, Lys111, His113, and 133–141 (EDLTTAGGS). Thr137 serves as a coordination point for orotate.

The protein belongs to the purine/pyrimidine phosphoribosyltransferase family. PyrE subfamily. Homodimer. Mg(2+) is required as a cofactor.

The catalysed reaction is orotidine 5'-phosphate + diphosphate = orotate + 5-phospho-alpha-D-ribose 1-diphosphate. It participates in pyrimidine metabolism; UMP biosynthesis via de novo pathway; UMP from orotate: step 1/2. In terms of biological role, catalyzes the transfer of a ribosyl phosphate group from 5-phosphoribose 1-diphosphate to orotate, leading to the formation of orotidine monophosphate (OMP). The protein is Orotate phosphoribosyltransferase of Rhizobium etli (strain CIAT 652).